The sequence spans 319 residues: Mitochondrial fission regulator 1-like-A (319 aa).

The interval 1–37 (MASLGAAAEPERNLFGKDEAEAYESPEGRRSGRKKRT) is disordered. A compositionally biased stretch (basic and acidic residues) spans 9–30 (EPERNLFGKDEAEAYESPEGRR).

This sequence belongs to the MTFR1 family.

Its subcellular location is the mitochondrion outer membrane. In terms of biological role, mitochondrial protein required for adaptation of miochondrial dynamics to metabolic changes. Regulates mitochondrial morphology at steady state and mediates AMPK-dependent stress-induced mitochondrial fragmentation via the control of OPA1 levels. The chain is Mitochondrial fission regulator 1-like-A (mtfr1l-a) from Xenopus laevis (African clawed frog).